The primary structure comprises 320 residues: Dual oxidase maturation factor 2 (320 aa).

A helical transmembrane segment spans residues valine 22 to leucine 42. The Cytoplasmic portion of the chain corresponds to proline 43–tryptophan 51. Residues phenylalanine 52–phenylalanine 72 traverse the membrane as a helical segment. Residues serine 73 to threonine 183 lie on the Extracellular side of the membrane. N-linked (GlcNAc...) asparagine glycosylation is found at asparagine 84, asparagine 109, and asparagine 121. Residues leucine 184–leucine 204 form a helical membrane-spanning segment. Residues tyrosine 205–glycine 206 lie on the Cytoplasmic side of the membrane. The chain crosses the membrane as a helical span at residues glycine 207 to isoleucine 227. The Extracellular segment spans residues serine 228 to serine 249. The chain crosses the membrane as a helical span at residues phenylalanine 250 to leucine 270. The Cytoplasmic portion of the chain corresponds to histidine 271–leucine 320.

It belongs to the DUOXA family. In terms of assembly, heterodimer with DUXA2; disulfide-linked. Interacts with CSNK1G2. N-glycosylated.

It is found in the endoplasmic reticulum membrane. In terms of biological role, required for the maturation and the transport from the endoplasmic reticulum to the plasma membrane of functional DUOX2. May play a role in thyroid hormone synthesis. This chain is Dual oxidase maturation factor 2 (Duoxa2), found in Mus musculus (Mouse).